A 335-amino-acid chain; its full sequence is Methionine import ATP-binding protein MetN 1 (335 aa).

The ABC transporter domain occupies 2–242 (IEFQNVHKTY…PKHPTTKRFV (241 aa)). Position 38–45 (38–45 (GHSGAGKS)) interacts with ATP.

The protein belongs to the ABC transporter superfamily. Methionine importer (TC 3.A.1.24) family. In terms of assembly, the complex is composed of two ATP-binding proteins (MetN), two transmembrane proteins (MetI) and a solute-binding protein (MetQ).

It localises to the cell inner membrane. It carries out the reaction L-methionine(out) + ATP + H2O = L-methionine(in) + ADP + phosphate + H(+). The catalysed reaction is D-methionine(out) + ATP + H2O = D-methionine(in) + ADP + phosphate + H(+). Functionally, part of the ABC transporter complex MetNIQ involved in methionine import. Responsible for energy coupling to the transport system. The sequence is that of Methionine import ATP-binding protein MetN 1 from Pseudomonas fluorescens (strain Pf0-1).